We begin with the raw amino-acid sequence, 365 residues long: Chorismate synthase (365 aa).

Arg48 and Arg54 together coordinate NADP(+). FMN-binding positions include 125-127 (RAS), 237-238 (NA), Gly277, 292-296 (KPTSS), and Arg318.

Belongs to the chorismate synthase family. As to quaternary structure, homotetramer. Requires FMNH2 as cofactor.

The enzyme catalyses 5-O-(1-carboxyvinyl)-3-phosphoshikimate = chorismate + phosphate. The protein operates within metabolic intermediate biosynthesis; chorismate biosynthesis; chorismate from D-erythrose 4-phosphate and phosphoenolpyruvate: step 7/7. Catalyzes the anti-1,4-elimination of the C-3 phosphate and the C-6 proR hydrogen from 5-enolpyruvylshikimate-3-phosphate (EPSP) to yield chorismate, which is the branch point compound that serves as the starting substrate for the three terminal pathways of aromatic amino acid biosynthesis. This reaction introduces a second double bond into the aromatic ring system. The polypeptide is Chorismate synthase (Polaromonas sp. (strain JS666 / ATCC BAA-500)).